The sequence spans 368 residues: UDP-N-acetylglucosamine--N-acetylmuramyl-(pentapeptide) pyrophosphoryl-undecaprenol N-acetylglucosamine transferase (368 aa).

Residues 14 to 16 (TGG), Asn-125, Arg-168, Ser-196, and Gln-297 each bind UDP-N-acetyl-alpha-D-glucosamine.

Belongs to the glycosyltransferase 28 family. MurG subfamily.

It is found in the cell inner membrane. The catalysed reaction is di-trans,octa-cis-undecaprenyl diphospho-N-acetyl-alpha-D-muramoyl-L-alanyl-D-glutamyl-meso-2,6-diaminopimeloyl-D-alanyl-D-alanine + UDP-N-acetyl-alpha-D-glucosamine = di-trans,octa-cis-undecaprenyl diphospho-[N-acetyl-alpha-D-glucosaminyl-(1-&gt;4)]-N-acetyl-alpha-D-muramoyl-L-alanyl-D-glutamyl-meso-2,6-diaminopimeloyl-D-alanyl-D-alanine + UDP + H(+). Its pathway is cell wall biogenesis; peptidoglycan biosynthesis. Functionally, cell wall formation. Catalyzes the transfer of a GlcNAc subunit on undecaprenyl-pyrophosphoryl-MurNAc-pentapeptide (lipid intermediate I) to form undecaprenyl-pyrophosphoryl-MurNAc-(pentapeptide)GlcNAc (lipid intermediate II). The sequence is that of UDP-N-acetylglucosamine--N-acetylmuramyl-(pentapeptide) pyrophosphoryl-undecaprenol N-acetylglucosamine transferase from Nitrobacter winogradskyi (strain ATCC 25391 / DSM 10237 / CIP 104748 / NCIMB 11846 / Nb-255).